Here is a 219-residue protein sequence, read N- to C-terminus: tRNA (guanine-N(7)-)-methyltransferase (219 aa).

S-adenosyl-L-methionine is bound by residues Glu51, Glu76, Asp103, and Asp125. Asp125 is a catalytic residue. Substrate contacts are provided by residues Lys129, Asp161, and 199–202; that span reads TRYE.

Belongs to the class I-like SAM-binding methyltransferase superfamily. TrmB family.

It catalyses the reaction guanosine(46) in tRNA + S-adenosyl-L-methionine = N(7)-methylguanosine(46) in tRNA + S-adenosyl-L-homocysteine. The protein operates within tRNA modification; N(7)-methylguanine-tRNA biosynthesis. Its function is as follows. Catalyzes the formation of N(7)-methylguanine at position 46 (m7G46) in tRNA. The chain is tRNA (guanine-N(7)-)-methyltransferase from Hyphomonas neptunium (strain ATCC 15444).